Reading from the N-terminus, the 584-residue chain is DNA damage-binding protein CMR1 (584 aa).

The segment covering 29–44 has biased composition (polar residues); that stretch reads SATDSISREIPNQRQA. The interval 29 to 90 is disordered; that stretch reads SATDSISREI…TEEYQKVKEE (62 aa). Residues 59–68 show a composition bias toward basic and acidic residues; sequence IKKEPQEPSR. Positions 76–110 form a coiled coil; that stretch reads VTMENTEEYQKVKEEMEEAERKKKELEKLKSTRLF. 6 WD repeats span residues 226–267, 274–314, 373–413, 431–469, 506–549, and 553–584; these read ITHQ…DEDP, PHGR…SSEV, LHDK…KSNS, SSRL…SELP, GRWV…LAHL, and EKVG…YLFE.

It belongs to the WD repeat DDB2/WDR76 family.

Functionally, DNA-binding protein that binds to both single- and double-stranded DNA. Binds preferentially to UV-damaged DNA. May be involved in DNA-metabolic processes. The protein is DNA damage-binding protein CMR1 of Debaryomyces hansenii (strain ATCC 36239 / CBS 767 / BCRC 21394 / JCM 1990 / NBRC 0083 / IGC 2968) (Yeast).